We begin with the raw amino-acid sequence, 409 residues long: MTSVGLAPVSGLRESSSHSVGVDRLPEEMNDMRIRDDKEIEAAIVDGNGTETGHIIVTTIGGRHGQPKQTISYMAERIVGQGSFGVVFQAKCLETGETVAIKKVLQDKRYKNRELQTMRLLDHPNVVCLKHCFFSTTEKDEVYLNLVLEYVPETVHRVIKHYNKLNQRMPLILVKLYTYQIFRALSYIHHTIGVCHRDIKPQNLLVNPHTHQVKLCDFGSAKVLVKGEPNISYICSRYYRAPELIFGATEYTTAIDIWSAGCVLAELLLGQPLFPGESGVDQLVEIIKVLGTPTREEIKCMNPNYNEFKFPQIKAHPWHKIFHKRMPPEAVDLVSRLLQYSPNLRCTALEAVTHAFFDELRDPNTRLPNGRVLPPLFNFKAHELKGVSAENLLKLVPEHARKQCPSLGL.

A disordered region spans residues 1-27 (MTSVGLAPVSGLRESSSHSVGVDRLPE). In terms of domain architecture, Protein kinase spans 73-357 (YMAERIVGQG…ALEAVTHAFF (285 aa)). ATP contacts are provided by residues 79 to 87 (VGQGSFGVV) and Lys102. Catalysis depends on Asp198, which acts as the Proton acceptor.

The protein belongs to the protein kinase superfamily. CMGC Ser/Thr protein kinase family. GSK-3 subfamily. In terms of processing, autophosphorylated mainly on threonine and serine residues.

The catalysed reaction is L-seryl-[protein] + ATP = O-phospho-L-seryl-[protein] + ADP + H(+). It catalyses the reaction L-threonyl-[protein] + ATP = O-phospho-L-threonyl-[protein] + ADP + H(+). Its function is as follows. May mediate extracellular signals to regulate transcription in differentiating cells. The polypeptide is Shaggy-related protein kinase NtK-1 (NTK-1) (Nicotiana tabacum (Common tobacco)).